The chain runs to 165 residues: UPF0178 protein Bphyt_5655 (165 aa).

Disordered stretches follow at residues 115–134 and 139–165; these read LRGS…RDSK and ELDR…PPTE.

Belongs to the UPF0178 family.

This is UPF0178 protein Bphyt_5655 from Paraburkholderia phytofirmans (strain DSM 17436 / LMG 22146 / PsJN) (Burkholderia phytofirmans).